Here is a 679-residue protein sequence, read N- to C-terminus: DNA ligase (679 aa).

Residues 41 to 45 (DSVYD), 90 to 91 (SL), and Glu-120 contribute to the NAD(+) site. Residue Lys-122 is the N6-AMP-lysine intermediate of the active site. 4 residues coordinate NAD(+): Arg-143, Glu-177, Lys-293, and Lys-317. Zn(2+)-binding residues include Cys-411, Cys-414, Cys-429, and Cys-434. Residues 597-679 (DSNSWFAGKR…SETMREDAQA (83 aa)) form the BRCT domain.

Belongs to the NAD-dependent DNA ligase family. LigA subfamily. Mg(2+) serves as cofactor. The cofactor is Mn(2+).

It catalyses the reaction NAD(+) + (deoxyribonucleotide)n-3'-hydroxyl + 5'-phospho-(deoxyribonucleotide)m = (deoxyribonucleotide)n+m + AMP + beta-nicotinamide D-nucleotide.. DNA ligase that catalyzes the formation of phosphodiester linkages between 5'-phosphoryl and 3'-hydroxyl groups in double-stranded DNA using NAD as a coenzyme and as the energy source for the reaction. It is essential for DNA replication and repair of damaged DNA. This Lactiplantibacillus plantarum (strain ATCC BAA-793 / NCIMB 8826 / WCFS1) (Lactobacillus plantarum) protein is DNA ligase.